Consider the following 789-residue polypeptide: Zinc finger protein GLIS1 (789 aa).

2 stretches are compositionally biased toward basic and acidic residues: residues 1–16 and 63–74; these read MHCE…RPKE and RAHDLLRPRSPR. Disordered regions lie at residues 1–29, 53–93, and 278–304; these read MHCE…GPVS, LLPR…YGHS, and PPLP…QEGS. Residues 80–92 are compositionally biased toward polar residues; it reads KTGSGKVNGSYGH. A C2H2-type 1 zinc finger spans residues 366–391; that stretch reads QACRWVDCCAAYEQQEELVRHIEKSH. The segment at 400–427 adopts a C2H2-type 2; atypical zinc-finger fold; the sequence is FTCFWAGCVRRYKPFNARYKLLIHMRVH. C2H2-type zinc fingers lie at residues 433–457, 463–487, and 493–517; these read NKCM…LRSH, YLCQ…QRTH, and YACQ…VKAH. Disordered stretches follow at residues 506–529 and 573–684; these read DPSS…KKLH and VYPG…QGYQ. The short motif at 511-527 is the Bipartite nuclear localization signal element; the sequence is RKHVKAHSAKEQQVRKK. Residues 648–658 show a composition bias toward low complexity; it reads ASQSQSPGGQS.

This sequence belongs to the GLI C2H2-type zinc-finger protein family. As to quaternary structure, interacts with KLF4. Interacts with POU5F1 and/or POU5F1B. Interacts with SOX2. In the adult, expressed highly in placenta and kidney and at lower levels in the testis, brain, colon, brown fat tissue and thymus. During embryo development, expressed in the frontal nasal region, branchial arches, somites, vibrissal and hair follicles, limb buds, craniofacial regions, ventral part of the tail, intervertebral disks, teeth, eyes and kidney.

It localises to the nucleus. Its function is as follows. Acts both as a repressor and an ctivator of transcription. Binds to the consensus sequence 5'-GACCACCCAC-3'. By controlling the expression of genes involved in cell differentiation inhibits the lineage commitment of multipotent cells. Prevents, for instance, the differentiation of multipotent mesenchymal cells into adipocyte and osteoblast. The protein is Zinc finger protein GLIS1 of Mus musculus (Mouse).